The following is a 534-amino-acid chain: Beta-1,2-xylosyltransferase (534 aa).

At 1 to 11 the chain is on the cytoplasmic side; sequence MSKRNPKILKI. The helical; Signal-anchor for type II membrane protein transmembrane segment at 12-34 threads the bilayer; sequence FLYMLLLNSLFLIIYFVFHSSSF. The Lumenal segment spans residues 35–534; it reads SPEQSQPPHI…LTEIMKSLGC (500 aa). 3 N-linked (GlcNAc...) asparagine glycosylation sites follow: Asn-51, Asn-301, and Asn-479.

Post-translationally, glycosylation at least at one of the two sites Asn-51 and Asn-301 is necessary for enzyme stability and activity.

It is found in the golgi apparatus membrane. It carries out the reaction N(4)-{beta-D-GlcNAc-(1-&gt;2)-alpha-D-Man-(1-&gt;3)-[beta-D-GlcNAc-(1-&gt;2)-alpha-D-Man-(1-&gt;6)]-beta-D-Man-(1-&gt;4)-beta-D-GlcNAc-(1-&gt;4)-beta-D-GlcNAc}-L-asparaginyl-[protein] + UDP-alpha-D-xylose = N(4)-{beta-D-GlcNAc-(1-&gt;2)-alpha-D-Man-(1-&gt;3)-[beta-D-GlcNAc-(1-&gt;2)-alpha-D-Man-(1-&gt;6)]-[beta-D-Xyl-(1-&gt;2)]-beta-D-Man-(1-&gt;4)-beta-D-GlcNAc-(1-&gt;4)-beta-D-GlcNAc}-L-asparaginyl-[protein] + UDP + H(+). It participates in protein modification; protein glycosylation. In terms of biological role, glycosyltransferase involved in the xylosylation of N-glycans. Possesses beta-1,2-xylosyltransferase activity, transferring xylose from UDP-xylose to the core beta-linked mannose of N-glycans. Involved in the biosynthesis of glycoprotein bound N-glycans. Does not require metal ions for its activity. The chain is Beta-1,2-xylosyltransferase from Arabidopsis thaliana (Mouse-ear cress).